Here is a 279-residue protein sequence, read N- to C-terminus: Aldo-keto reductase Mvan_2161 (279 aa).

Y54 acts as the Proton donor in catalysis. Residues L194, V196, I232, R234, S235, R240, S243, N244, and R270 each contribute to the NADPH site.

It belongs to the aldo/keto reductase family.

This chain is Aldo-keto reductase Mvan_2161, found in Mycolicibacterium vanbaalenii (strain DSM 7251 / JCM 13017 / BCRC 16820 / KCTC 9966 / NRRL B-24157 / PYR-1) (Mycobacterium vanbaalenii).